A 591-amino-acid chain; its full sequence is Aspartate--tRNA(Asp/Asn) ligase (591 aa).

E174 serves as a coordination point for L-aspartate. The tract at residues Q198 to K201 is aspartate. R220 provides a ligand contact to L-aspartate. ATP contacts are provided by residues R220–E222 and Q229. An L-aspartate-binding site is contributed by H450. E483 is an ATP binding site. R490 lines the L-aspartate pocket. G535 to R538 is an ATP binding site.

Belongs to the class-II aminoacyl-tRNA synthetase family. Type 1 subfamily. As to quaternary structure, homodimer.

Its subcellular location is the cytoplasm. It carries out the reaction tRNA(Asx) + L-aspartate + ATP = L-aspartyl-tRNA(Asx) + AMP + diphosphate. In terms of biological role, aspartyl-tRNA synthetase with relaxed tRNA specificity since it is able to aspartylate not only its cognate tRNA(Asp) but also tRNA(Asn). Reaction proceeds in two steps: L-aspartate is first activated by ATP to form Asp-AMP and then transferred to the acceptor end of tRNA(Asp/Asn). This is Aspartate--tRNA(Asp/Asn) ligase from Pseudomonas fluorescens (strain ATCC BAA-477 / NRRL B-23932 / Pf-5).